Reading from the N-terminus, the 212-residue chain is MTEQKIPRATAKRLPIYYRYLNILLDADKTRVSSTELSEAVKVDSATIRRDFSYFGALGKRGYGYDVESLIKFFKKILNQDRLTNVALIGVGNLGHALLNFNFHQDGNVRISAAFDVNETIANTIQSGVPIYPMTDLRTQLEEQQIQVAILTVPSDVAQSVTDDAVAGGVKGILNFTPLRITVPKDVRVQNVDLTNELQTLIYFLEHYNSKE.

Residues 16-55 (IYYRYLNILLDADKTRVSSTELSEAVKVDSATIRRDFSYF) constitute a DNA-binding region (H-T-H motif). An NAD(+)-binding site is contributed by 90–95 (GVGNLG).

The protein belongs to the transcriptional regulatory Rex family. As to quaternary structure, homodimer.

It is found in the cytoplasm. Modulates transcription in response to changes in cellular NADH/NAD(+) redox state. This chain is Redox-sensing transcriptional repressor Rex, found in Levilactobacillus brevis (strain ATCC 367 / BCRC 12310 / CIP 105137 / JCM 1170 / LMG 11437 / NCIMB 947 / NCTC 947) (Lactobacillus brevis).